Consider the following 188-residue polypeptide: Elongation factor P (188 aa).

Residue lysine 34 is modified to N6-(3,6-diaminohexanoyl)-5-hydroxylysine.

This sequence belongs to the elongation factor P family. May be beta-lysylated on the epsilon-amino group of Lys-34 by the combined action of EpmA and EpmB, and then hydroxylated on the C5 position of the same residue by EpmC (if this protein is present). Lysylation is critical for the stimulatory effect of EF-P on peptide-bond formation. The lysylation moiety may extend toward the peptidyltransferase center and stabilize the terminal 3-CCA end of the tRNA. Hydroxylation of the C5 position on Lys-34 may allow additional potential stabilizing hydrogen-bond interactions with the P-tRNA.

It is found in the cytoplasm. The protein operates within protein biosynthesis; polypeptide chain elongation. Involved in peptide bond synthesis. Alleviates ribosome stalling that occurs when 3 or more consecutive Pro residues or the sequence PPG is present in a protein, possibly by augmenting the peptidyl transferase activity of the ribosome. Modification of Lys-34 is required for alleviation. The chain is Elongation factor P from Vibrio campbellii (strain ATCC BAA-1116).